The primary structure comprises 176 residues: NAD(P)H-quinone oxidoreductase subunit 6, chloroplastic (176 aa).

Transmembrane regions (helical) follow at residues 10-30 (FLLV…VLLT), 32-52 (PIYS…FYIL), 61-81 (AQLL…VMFM), 92-112 (LWTI…VSLI), and 152-172 (FFLP…GAIA).

This sequence belongs to the complex I subunit 6 family. NDH is composed of at least 16 different subunits, 5 of which are encoded in the nucleus.

Its subcellular location is the plastid. The protein resides in the chloroplast thylakoid membrane. It catalyses the reaction a plastoquinone + NADH + (n+1) H(+)(in) = a plastoquinol + NAD(+) + n H(+)(out). The enzyme catalyses a plastoquinone + NADPH + (n+1) H(+)(in) = a plastoquinol + NADP(+) + n H(+)(out). Functionally, NDH shuttles electrons from NAD(P)H:plastoquinone, via FMN and iron-sulfur (Fe-S) centers, to quinones in the photosynthetic chain and possibly in a chloroplast respiratory chain. The immediate electron acceptor for the enzyme in this species is believed to be plastoquinone. Couples the redox reaction to proton translocation, and thus conserves the redox energy in a proton gradient. The chain is NAD(P)H-quinone oxidoreductase subunit 6, chloroplastic (ndhG) from Gossypium hirsutum (Upland cotton).